The sequence spans 757 residues: Polyribonucleotide nucleotidyltransferase (757 aa).

Residues D531 and D537 each coordinate Mg(2+). The region spanning 597–656 (PRVTTIRVPVDKIGEVIGPKGKIINAITEETGAQISIEDDGTVFVGATDGPSAQAAIDRI) is the KH domain. The S1 motif domain occupies 668-737 (GERFLGTVVK…KRGKISLVLV (70 aa)).

It belongs to the polyribonucleotide nucleotidyltransferase family. Mg(2+) serves as cofactor.

It localises to the cytoplasm. The enzyme catalyses RNA(n+1) + phosphate = RNA(n) + a ribonucleoside 5'-diphosphate. Involved in mRNA degradation. Catalyzes the phosphorolysis of single-stranded polyribonucleotides processively in the 3'- to 5'-direction. This Mycolicibacterium paratuberculosis (strain ATCC BAA-968 / K-10) (Mycobacterium paratuberculosis) protein is Polyribonucleotide nucleotidyltransferase.